The primary structure comprises 688 residues: Telomere length regulation protein TEL2 (688 aa).

Phosphoserine is present on residues Ser417 and Ser419.

It belongs to the TEL2 family. Component of the TTT complex composed of TEL2, TTI1 and TTI2. Interacts with TTI1 and TTI2.

Its subcellular location is the nucleus. The protein resides in the chromosome. It localises to the telomere. Part of the TTT complex that is required to stabilize protein levels of the phosphatidylinositol 3-kinase-related protein kinase (PIKK) family proteins. Required for telomere length regulation and telomere position effect. Regulates telomere length and participates in gene silencing at subtelomeric regions. Binds to telomeric DNA repeats. This chain is Telomere length regulation protein TEL2 (TEL2), found in Saccharomyces cerevisiae (strain ATCC 204508 / S288c) (Baker's yeast).